The sequence spans 589 residues: Enhancer of polycomb-like protein 1 (589 aa).

Disordered stretches follow at residues 298–339, 403–430, 468–497, and 516–589; these read GDED…RPAE, MTPP…PNPP, LPSP…DAPV, and LQTV…QPVS. Residues 474–487 show a composition bias toward basic and acidic residues; that stretch reads DLSEEQSDRWKYDQ. Positions 557–566 are enriched in low complexity; the sequence is PQPNQSQSLP. Residues 567-589 show a composition bias toward pro residues; it reads LPQPQQPVAQPQPQPQPQAQPVS.

The protein belongs to the enhancer of polycomb family. As to quaternary structure, component of the NuA4 histone acetyltransferase complex.

It localises to the nucleus. Component of the NuA4 histone acetyltransferase complex which is involved in transcriptional activation of selected genes principally by acetylation of nucleosomal histone H4 and H2A. The NuA4 complex is also involved in DNA repair. Involved in gene silencing by neighboring heterochromatin, blockage of the silencing spreading along the chromosome, and required for cell cycle progression through G2/M. This is Enhancer of polycomb-like protein 1 (epl-1) from Neurospora crassa (strain ATCC 24698 / 74-OR23-1A / CBS 708.71 / DSM 1257 / FGSC 987).